Consider the following 1034-residue polypeptide: Presequence protease, mitochondrial (1034 aa).

The transit peptide at 1 to 26 (MLKTRLKQSRAISRVVRRYACSHPIS) directs the protein to the mitochondrion. A Zn(2+)-binding site is contributed by His97. Glu100 serves as the catalytic Proton acceptor. His101 contacts Zn(2+). Glu173 is a catalytic residue. Residue Glu198 participates in Zn(2+) binding.

The protein belongs to the peptidase M16 family. PreP subfamily. As to quaternary structure, monomer and homodimer; homodimerization is induced by binding of the substrate. It depends on Zn(2+) as a cofactor.

It localises to the mitochondrion intermembrane space. The protein resides in the mitochondrion matrix. Its function is as follows. Degrades mitochondrial transit peptides after their cleavage in the intermembrane space or in the matrix, and presequence peptides; clearance of these peptides is required to keep the presequence processing machinery running. Preferentially cleaves the N-terminal side of paired basic amino acid residues. Also degrades other unstructured peptides. May function as an ATP-dependent peptidase as opposed to a metalloendopeptidase. This Candida albicans (strain SC5314 / ATCC MYA-2876) (Yeast) protein is Presequence protease, mitochondrial (CYM1).